The primary structure comprises 544 residues: Chitin-inducible gibberellin-responsive protein 2 (544 aa).

A disordered region spans residues 1-123; it reads MADTPTSRMI…VGASCVTEDP (123 aa). 3 stretches are compositionally biased toward polar residues: residues 15 to 30, 63 to 74, and 86 to 101; these read NIPSQNLKQFQYSDNP, SQATPNKYTLDS, and PSSQSFTTRSGSPLSQ. Positions 165 to 544 constitute a GRAS domain; it reads RMMGIPRGNL…RPLVVSSAWH (380 aa). Residues 172–232 form a leucine repeat I (LRI) region; sequence GNLKELLIAC…VARLASSGIS (61 aa). The segment at 251–316 is VHIID; that stretch reads MHFLYEACPY…GGPPTVRITG (66 aa). The VHIID motif lies at 282–286; sequence IHIID. Residues 332–364 form a leucine repeat II (LRII) region; the sequence is LVGRRLSHIASLCKVPFEFHPLAISGSKVEAAH. A PFYRE region spans residues 373–467; sequence LAVNFTLELH…QHCLAREIVN (95 aa). The SAW stretch occupies residues 470-544; that stretch reads ACEGEERAER…RPLVVSSAWH (75 aa).

It belongs to the GRAS family.

The protein localises to the nucleus. Functionally, may play a regulatory role in the early step of oligosaccharide elicitor response, downstream of the membrane-associated high-affinity chitin-binding protein. This Oryza sativa subsp. japonica (Rice) protein is Chitin-inducible gibberellin-responsive protein 2 (CIGR2).